The chain runs to 320 residues: tRNA dimethylallyltransferase (320 aa).

17 to 24 contributes to the ATP binding site; that stretch reads GPTAVGKT. Residue 19–24 coordinates substrate; the sequence is TAVGKT. The interval 42-45 is interaction with substrate tRNA; the sequence is DSMQ.

Belongs to the IPP transferase family. Monomer. The cofactor is Mg(2+).

It catalyses the reaction adenosine(37) in tRNA + dimethylallyl diphosphate = N(6)-dimethylallyladenosine(37) in tRNA + diphosphate. Functionally, catalyzes the transfer of a dimethylallyl group onto the adenine at position 37 in tRNAs that read codons beginning with uridine, leading to the formation of N6-(dimethylallyl)adenosine (i(6)A). This chain is tRNA dimethylallyltransferase, found in Bacillus thuringiensis (strain Al Hakam).